The following is a 1050-amino-acid chain: DNA-directed RNA polymerase subunit beta (1050 aa).

It belongs to the RNA polymerase beta chain family. In plastids the minimal PEP RNA polymerase catalytic core is composed of four subunits: alpha, beta, beta', and beta''. When a (nuclear-encoded) sigma factor is associated with the core the holoenzyme is formed, which can initiate transcription (Potential).

It is found in the plastid. The protein resides in the apicoplast. It carries out the reaction RNA(n) + a ribonucleoside 5'-triphosphate = RNA(n+1) + diphosphate. Functionally, DNA-dependent RNA polymerase catalyzes the transcription of DNA into RNA using the four ribonucleoside triphosphates as substrates. The chain is DNA-directed RNA polymerase subunit beta (rpoB) from Neospora caninum (Coccidian parasite).